The primary structure comprises 405 residues: 4-hydroxy-3-methylbut-2-enyl diphosphate reductase (405 aa).

A [4Fe-4S] cluster-binding site is contributed by Cys-66. Residue His-96 participates in (2E)-4-hydroxy-3-methylbut-2-enyl diphosphate binding. His-96 is a dimethylallyl diphosphate binding site. His-96 serves as a coordination point for isopentenyl diphosphate. [4Fe-4S] cluster is bound at residue Cys-158. His-186 lines the (2E)-4-hydroxy-3-methylbut-2-enyl diphosphate pocket. His-186 serves as a coordination point for dimethylallyl diphosphate. His-186 is an isopentenyl diphosphate binding site. Catalysis depends on Glu-188, which acts as the Proton donor. Thr-251 provides a ligand contact to (2E)-4-hydroxy-3-methylbut-2-enyl diphosphate. Cys-289 is a [4Fe-4S] cluster binding site. (2E)-4-hydroxy-3-methylbut-2-enyl diphosphate contacts are provided by Ser-318, Ser-319, Asn-320, and Ser-380. Residues Ser-318, Ser-319, Asn-320, and Ser-380 each coordinate dimethylallyl diphosphate. Isopentenyl diphosphate-binding residues include Ser-318, Ser-319, Asn-320, and Ser-380.

This sequence belongs to the IspH family. [4Fe-4S] cluster is required as a cofactor.

The enzyme catalyses isopentenyl diphosphate + 2 oxidized [2Fe-2S]-[ferredoxin] + H2O = (2E)-4-hydroxy-3-methylbut-2-enyl diphosphate + 2 reduced [2Fe-2S]-[ferredoxin] + 2 H(+). It carries out the reaction dimethylallyl diphosphate + 2 oxidized [2Fe-2S]-[ferredoxin] + H2O = (2E)-4-hydroxy-3-methylbut-2-enyl diphosphate + 2 reduced [2Fe-2S]-[ferredoxin] + 2 H(+). It participates in isoprenoid biosynthesis; dimethylallyl diphosphate biosynthesis; dimethylallyl diphosphate from (2E)-4-hydroxy-3-methylbutenyl diphosphate: step 1/1. Its pathway is isoprenoid biosynthesis; isopentenyl diphosphate biosynthesis via DXP pathway; isopentenyl diphosphate from 1-deoxy-D-xylulose 5-phosphate: step 6/6. In terms of biological role, catalyzes the conversion of 1-hydroxy-2-methyl-2-(E)-butenyl 4-diphosphate (HMBPP) into a mixture of isopentenyl diphosphate (IPP) and dimethylallyl diphosphate (DMAPP). Acts in the terminal step of the DOXP/MEP pathway for isoprenoid precursor biosynthesis. The sequence is that of 4-hydroxy-3-methylbut-2-enyl diphosphate reductase from Cyanothece sp. (strain PCC 7425 / ATCC 29141).